The following is a 143-amino-acid chain: Transcriptional regulator MraZ (143 aa).

SpoVT-AbrB domains follow at residues 5–47 (EYEH…TLEE) and 76–119 (AVEV…DRAS).

Belongs to the MraZ family. In terms of assembly, forms oligomers.

It is found in the cytoplasm. It localises to the nucleoid. The sequence is that of Transcriptional regulator MraZ from Staphylococcus carnosus (strain TM300).